Consider the following 384-residue polypeptide: DNA repair protein RAD51 homolog 2 (384 aa).

The segment at 1 to 75 (MGSKKLKRVG…TAYGIKAQRS (75 aa)) is interaction with RAD51C. Residue 108–115 (GPPGCGKT) participates in ATP binding.

Belongs to the RecA family. RAD51 subfamily. Part of the BCDX2 complex consisting of RAD51B, RAD51C, RAD51D and XRCC2; the complex has a ring-like structure arranged into a flat disc around a central channel. The BCDX2 subcomplex RAD51B:RAD51C interacts with RAD51. Interacts with SWSAP1; involved in homologous recombination repair. Interacts with HELQ. In terms of processing, phosphorylated on tyrosine residues by BCR-ABL. Expressed in a wide range of tissues.

It is found in the nucleus. Involved in the homologous recombination repair (HRR) pathway of double-stranded DNA breaks arising during DNA replication or induced by DNA-damaging agents. May promote the assembly of presynaptic RAD51 nucleoprotein filaments. Binds single-stranded DNA and double-stranded DNA and has DNA-dependent ATPase activity. Part of the RAD51 paralog protein complex BCDX2 which acts in the BRCA1-BRCA2-dependent HR pathway. Upon DNA damage, BCDX2 acts downstream of BRCA2 recruitment and upstream of RAD51 recruitment. BCDX2 binds predominantly to the intersection of the four duplex arms of the Holliday junction and to junction of replication forks. The BCDX2 complex was originally reported to bind single-stranded DNA, single-stranded gaps in duplex DNA and specifically to nicks in duplex DNA. The BCDX2 subcomplex RAD51B:RAD51C exhibits single-stranded DNA-dependent ATPase activity suggesting an involvement in early stages of the HR pathway. The protein is DNA repair protein RAD51 homolog 2 (RAD51B) of Homo sapiens (Human).